The sequence spans 190 residues: Elongation factor P (190 aa).

An N6-(3,6-diaminohexanoyl)-5-hydroxylysine modification is found at K34.

The protein belongs to the elongation factor P family. Post-translationally, may be beta-lysylated on the epsilon-amino group of Lys-34 by the combined action of EpmA and EpmB, and then hydroxylated on the C5 position of the same residue by EpmC (if this protein is present). Lysylation is critical for the stimulatory effect of EF-P on peptide-bond formation. The lysylation moiety may extend toward the peptidyltransferase center and stabilize the terminal 3-CCA end of the tRNA. Hydroxylation of the C5 position on Lys-34 may allow additional potential stabilizing hydrogen-bond interactions with the P-tRNA.

The protein localises to the cytoplasm. It functions in the pathway protein biosynthesis; polypeptide chain elongation. Involved in peptide bond synthesis. Alleviates ribosome stalling that occurs when 3 or more consecutive Pro residues or the sequence PPG is present in a protein, possibly by augmenting the peptidyl transferase activity of the ribosome. Modification of Lys-34 is required for alleviation. The polypeptide is Elongation factor P (Hahella chejuensis (strain KCTC 2396)).